The sequence spans 555 residues: CTP synthase (555 aa).

The tract at residues 1–279 (MATNRAKSST…DNYIIRRLNL (279 aa)) is amidoligase domain. Residue Ser-21 participates in CTP binding. Ser-21 provides a ligand contact to UTP. Residues 22–27 (SLGKGL) and Asp-79 contribute to the ATP site. Residues Asp-79 and Glu-153 each contribute to the Mg(2+) site. CTP-binding positions include 160-162 (DIE), 200-205 (KTKPTQ), and Lys-236. UTP-binding positions include 200 to 205 (KTKPTQ) and Lys-236. The 250-residue stretch at 304-553 (TIGIVGKYID…VDAALKHQAG (250 aa)) folds into the Glutamine amidotransferase type-1 domain. Gly-367 serves as a coordination point for L-glutamine. Cys-394 functions as the Nucleophile; for glutamine hydrolysis in the catalytic mechanism. L-glutamine-binding positions include 395-398 (LGLQ), Glu-417, and Arg-478. Residues His-526 and Glu-528 contribute to the active site.

Belongs to the CTP synthase family. Homotetramer.

The catalysed reaction is UTP + L-glutamine + ATP + H2O = CTP + L-glutamate + ADP + phosphate + 2 H(+). It catalyses the reaction L-glutamine + H2O = L-glutamate + NH4(+). The enzyme catalyses UTP + NH4(+) + ATP = CTP + ADP + phosphate + 2 H(+). It participates in pyrimidine metabolism; CTP biosynthesis via de novo pathway; CTP from UDP: step 2/2. With respect to regulation, allosterically activated by GTP, when glutamine is the substrate; GTP has no effect on the reaction when ammonia is the substrate. The allosteric effector GTP functions by stabilizing the protein conformation that binds the tetrahedral intermediate(s) formed during glutamine hydrolysis. Inhibited by the product CTP, via allosteric rather than competitive inhibition. Functionally, catalyzes the ATP-dependent amination of UTP to CTP with either L-glutamine or ammonia as the source of nitrogen. Regulates intracellular CTP levels through interactions with the four ribonucleotide triphosphates. The protein is CTP synthase of Corynebacterium jeikeium (strain K411).